Reading from the N-terminus, the 92-residue chain is Small ribosomal subunit protein uS19c (92 aa).

This sequence belongs to the universal ribosomal protein uS19 family.

It is found in the plastid. Protein S19 forms a complex with S13 that binds strongly to the 16S ribosomal RNA. This chain is Small ribosomal subunit protein uS19c, found in Cuscuta reflexa (Southern Asian dodder).